A 402-amino-acid chain; its full sequence is Probable tRNA pseudouridine synthase tag-124 (402 aa).

Catalysis depends on aspartate 85, which acts as the Nucleophile. A disordered region spans residues 383–402 (SKKEKMAEKKKNGEESSDKL).

It belongs to the tRNA pseudouridine synthase TruA family.

It carries out the reaction a uridine in tRNA = a pseudouridine in tRNA. Formation of pseudouridine at position 38 and 39 in the anticodon stem and loop of transfer RNAs. The chain is Probable tRNA pseudouridine synthase tag-124 (tag-124) from Caenorhabditis elegans.